The following is an 897-amino-acid chain: DNA endonuclease RBBP8 (897 aa).

The tract at residues 22–45 (DLWTKLKECHDREVQGLQVKVTKL) is essential for binding to the MRN complex and for RPA focus formation on DNA damage. The stretch at 35–84 (VQGLQVKVTKLKQERILDAQRLEEFFTKNQQLREQQKVLHETIKVLEDRL) forms a coiled coil. The interval 45–160 (LKQERILDAQ…AELECEEDVI (116 aa)) is required for interaction with LMO4, probably by stabilizing the interaction through RPPB8 dimerization. Residues lysine 62 and lysine 115 each participate in a glycyl lysine isopeptide (Lys-Gly) (interchain with G-Cter in SUMO2) cross-link. The stretch at 117–138 (ITELMNERNTLQEENKKLSEQL) forms a coiled coil. Residue lysine 193 forms a Glycyl lysine isopeptide (Lys-Gly) (interchain with G-Cter in SUMO2) linkage. Serine 233 and serine 276 each carry phosphoserine. Over residues 292-307 (KQPFEESTRNTEDSLR) the composition is skewed to basic and acidic residues. The segment at 292–325 (KQPFEESTRNTEDSLRFSDSTSKTPPQEELPTRV) is disordered. The residue at position 315 (threonine 315) is a Phosphothreonine; by CDK2. Phosphoserine is present on residues serine 326, serine 327, and serine 349. Residues lysine 360 and lysine 378 each participate in a glycyl lysine isopeptide (Lys-Gly) (interchain with G-Cter in SUMO2) cross-link. Residue serine 379 is modified to Phosphoserine. Glycyl lysine isopeptide (Lys-Gly) (interchain with G-Cter in SUMO2) cross-links involve residues lysine 396, lysine 404, and lysine 410. The disordered stretch occupies residues 419-464 (QNRTEYGKDSNTDKHLEPLKSLGGRTSKRKKTEEESEHEVSCPQAS). The span at 420–436 (NRTEYGKDSNTDKHLEP) shows a compositional bias: basic and acidic residues. Glycyl lysine isopeptide (Lys-Gly) (interchain with G-Cter in SUMO2) cross-links involve residues lysine 438 and lysine 449. The PXDLS motif motif lies at 490–494 (PLDLS). Residues 509-557 (SETSKNKFRQVTLYEALKTIPKGFSSSRKASDGNCTLPKDSPGEPCSQE) form a damage-recruitment motif region. Lysine 526 is covalently cross-linked (Glycyl lysine isopeptide (Lys-Gly) (interchain with G-Cter in SUMO2); alternate). Residues lysine 530, lysine 572, and lysine 578 each participate in a glycyl lysine isopeptide (Lys-Gly) (interchain with G-Cter in SUMO2) cross-link. Lysine 604 participates in a covalent cross-link: Glycyl lysine isopeptide (Lys-Gly) (interchain with G-Cter in SUMO2); alternate. Residues lysine 613, lysine 638, and lysine 640 each participate in a glycyl lysine isopeptide (Lys-Gly) (interchain with G-Cter in SUMO2) cross-link. The interval 641–685 (SLQNNQDVSFENIQWSIDPGADLSQYKMDVTVIDTKDGSQSKLGG) is required for interaction with LMO4, probably by making physical contact with LMO4. A Phosphoserine; by ATM modification is found at serine 664. Lysine 676 participates in a covalent cross-link: Glycyl lysine isopeptide (Lys-Gly) (interchain with G-Cter in SUMO2). Serine 679 is modified (phosphoserine). Residues 704 to 723 (KKQEQKGEKSSNEERKMNDS) form a disordered region. Lysine 719 is covalently cross-linked (Glycyl lysine isopeptide (Lys-Gly) (interchain with G-Cter in SUMO2)). The residue at position 723 (serine 723) is a Phosphoserine. Phosphoserine; by ATM is present on serine 745. Lysine 782 participates in a covalent cross-link: Glycyl lysine isopeptide (Lys-Gly) (interchain with G-Cter in SUMO2). Positions 840–842 (FRY) match the KLHL15-binding motif. Position 847 is a phosphothreonine; by CDK1 (threonine 847). Phosphothreonine; by ATR is present on threonine 859. Residue lysine 869 forms a Glycyl lysine isopeptide (Lys-Gly) (interchain with G-Cter in SUMO2) linkage. Positions 873–897 (DPCPRPKRRQPYNAIFSPKGKEQKT) are disordered.

This sequence belongs to the COM1/SAE2/CtIP family. In terms of assembly, homotetramer; formed by antiparallel association of helical extensions protruding from the N-termini of two parallel coiled-coil dimers. Forms a dumbbell-shaped particle in which polar globular domains are held about 30 nm apart by a central rod. Homotetramerization is required for DNA-end resection and repair. Interacts (via the PXDLS motif) with CTBP1; the interaction is disrupted via binding of the adenovirus E1A to CTBP1. Component of the BRCA1-RBBP8 complex. Interacts (the Ser-327 phosphorylated form) with BRCA1 (via the C-terminal BRCT domains): the interaction occurs in the G2 phase, ubiquitinates RBBP8 and involves RBBP8 in BRCA1-dependent G2/M checkpoint control on DNA damage. Interacts with RB1. Interacts with the MRN complex; interacts directly with MRE11; the interaction is required for efficient homologous recombination (HR) and regulation of the MRN complex. Interacts directly with RAD50. Interacts (when phosphorylated by CDK1) with NBN; promoting association with the MRN complex. Interacts with LM04 (via the LIM zinc-binding 1 domain). Interacts with SIAH1. Interacts with RNF138. Interacts with EXD2. Interacts with CUL3 and KLHL15; this interaction leads to RBBP8 proteasomal degradation. Directly interacts with PIN1; this interaction depends upon RBBP8 phosphorylation, predominantly at Thr-315. Interacts with FZR1; this interaction leads to APC/C-mediated RBBP8 proteasomal degradation. Interacts with AUNIP; leading to recruitment of RBBP8 to sites of DNA damage. Interacts with SAMHD1. Interacts with HDGFL2. Post-translationally, hyperphosphorylation upon ionizing radiation results in dissociation from BRCA1. Phosphorylation at Thr-847 by CDK1 is essential for the recruitment to DNA and the DNA repair function. Phosphorylation at Thr-847 and Thr-859 promote interaction with NBN and recruitment to double-strand breaks (DSBs). Phosphorylated on Ser-327 as cells enter G2 phase. This phosphorylation is required for binding BRCA1 and for the G2/M DNA damage transition checkpoint control. Phosphorylation at Thr-315, probably catalyzed by CDK2, is required for PIN1-binding, while phosphorylation at Ser-276 serves as a PIN1 isomerization site. Phosphorylation at Thr-315 is cell-cycle dependent. It steadily increases during S phase, peaks at late S/G2 phase, and drops at G1. Phosphorylation is not required for tetramerization. Binds to DNA more strongly when dephosphorylated. In terms of processing, ubiquitinated. Ubiquitination at multiple sites by BRCA1 (via its N-terminal RING domain) does not lead to its proteasomal degradation but instead the ubiquitinated RBBP8 binds to chromatin following DNA damage and may play a role in G2/M checkpoint control. Ubiquitinated by RNF138 at its N-terminus. Ubiquitinated through 'Lys-48' by the E3 CUL3-KLHL15 complex; this modification leads to proteasomal degradation. Ubiquitinated by the E3 FZR1/APC/C complex; this modification leads to proteasomal degradation. As to expression, expressed in ER-positive breast cancer lines, but tends to be down-regulated ER-negative cells (at protein level).

The protein localises to the nucleus. Its subcellular location is the chromosome. Functionally, endonuclease that cooperates with the MRE11-RAD50-NBN (MRN) complex in DNA-end resection, the first step of double-strand break (DSB) repair through the homologous recombination (HR) pathway. HR is restricted to S and G2 phases of the cell cycle and preferentially repairs DSBs resulting from replication fork collapse. Key determinant of DSB repair pathway choice, as it commits cells to HR by preventing classical non-homologous end-joining (NHEJ). Specifically promotes the endonuclease activity of the MRN complex to clear DNA ends containing protein adducts: recruited to DSBs by NBN following phosphorylation by CDK1, and promotes the endonuclease activity of MRE11 to clear protein-DNA adducts and generate clean double-strand break ends. Functions downstream of the MRN complex and ATM, promotes ATR activation and its recruitment to DSBs in the S/G2 phase facilitating the generation of ssDNA. Component of the BRCA1-RBBP8 complex that regulates CHEK1 activation and controls cell cycle G2/M checkpoints on DNA damage. During immunoglobulin heavy chain class-switch recombination, promotes microhomology-mediated alternative end joining (A-NHEJ) and plays an essential role in chromosomal translocations. Binds preferentially to DNA Y-junctions and to DNA substrates with blocked ends and promotes intermolecular DNA bridging. This chain is DNA endonuclease RBBP8 (RBBP8), found in Homo sapiens (Human).